The following is a 130-amino-acid chain: Phosphomevalonate dehydratase small subunit (130 aa).

The active-site Proton acceptor is Ser-62.

This sequence belongs to the AcnX type II small subunit family. In terms of assembly, heterodimer composed of a large subunit (PMDh-L) and a small subunit (PMDh-S).

It catalyses the reaction (R)-5-phosphomevalonate = (2E)-3-methyl-5-phosphooxypent-2-enoate + H2O. It functions in the pathway isoprenoid biosynthesis; isopentenyl diphosphate biosynthesis via mevalonate pathway. In terms of biological role, component of a hydro-lyase that catalyzes the dehydration of mevalonate 5-phosphate (MVA5P) to form trans-anhydromevalonate 5-phosphate (tAHMP). Involved in the archaeal mevalonate (MVA) pathway, which provides fundamental precursors for isoprenoid biosynthesis, such as isopentenyl diphosphate (IPP) and dimethylallyl diphosphate (DMAPP). The sequence is that of Phosphomevalonate dehydratase small subunit from Thermococcus onnurineus (strain NA1).